A 186-amino-acid chain; its full sequence is dCTP deaminase (186 aa).

107–112 (KSTYAR) serves as a coordination point for dCTP. Catalysis depends on Glu133, which acts as the Proton donor/acceptor. Positions 152, 166, and 176 each coordinate dCTP.

This sequence belongs to the dCTP deaminase family. In terms of assembly, homotrimer.

It carries out the reaction dCTP + H2O + H(+) = dUTP + NH4(+). It functions in the pathway pyrimidine metabolism; dUMP biosynthesis; dUMP from dCTP (dUTP route): step 1/2. Catalyzes the deamination of dCTP to dUTP. This Campylobacter lari (strain RM2100 / D67 / ATCC BAA-1060) protein is dCTP deaminase.